A 258-amino-acid polypeptide reads, in one-letter code: MSLIDPRAIIDPSARLAADVQVGPWSIVGAEVEIGEGTVIGPHVVLKGPTKIGKHNRIYQFSSVGEDTPDLKYKGEPTRLVIGDHNVIREGVTIHRGTVQDRAETTIGDHNLIMAYAHIGHDSVIGNHCILVNNTALAGHVHVDDWAILSGYTLVHQYCRIGAHSFSGMGSAIGKDVPAYVTVFGNPAEARSMNFEGMRRRGFSSEAIHALRRAYKVVYRQGHTVEEALAELAESAAQFPEVAVFRDSIQSATRGITR.

Belongs to the transferase hexapeptide repeat family. LpxA subfamily. As to quaternary structure, homotrimer.

It localises to the cytoplasm. It catalyses the reaction a (3R)-hydroxyacyl-[ACP] + UDP-N-acetyl-alpha-D-glucosamine = a UDP-3-O-[(3R)-3-hydroxyacyl]-N-acetyl-alpha-D-glucosamine + holo-[ACP]. It participates in glycolipid biosynthesis; lipid IV(A) biosynthesis; lipid IV(A) from (3R)-3-hydroxytetradecanoyl-[acyl-carrier-protein] and UDP-N-acetyl-alpha-D-glucosamine: step 1/6. Involved in the biosynthesis of lipid A, a phosphorylated glycolipid that anchors the lipopolysaccharide to the outer membrane of the cell. This Pseudomonas aeruginosa (strain LESB58) protein is Acyl-[acyl-carrier-protein]--UDP-N-acetylglucosamine O-acyltransferase.